The chain runs to 76 residues: Pigment-dispersing hormone A peptides (76 aa).

The first 20 residues, 1-20 (MRSAMVVLVLVAMVAVFTRA), serve as a signal peptide directing secretion. Residue alanine 73 is modified to Alanine amide.

It belongs to the arthropod PDH family. In terms of tissue distribution, optical ganglia of the eyestalk.

It localises to the secreted. The pigment-dispersing hormone causes the migration of the distal retinal pigment into the proximal end of the pigment chromatophore cells and thus decreases the amount of light entering the retinulas. May also function as a neurotransmitter and/or neuromodulator. The chain is Pigment-dispersing hormone A peptides from Faxonius limosus (Spinycheek crayfish).